We begin with the raw amino-acid sequence, 126 residues long: Large ribosomal subunit protein bL19 (126 aa).

The protein belongs to the bacterial ribosomal protein bL19 family.

This protein is located at the 30S-50S ribosomal subunit interface and may play a role in the structure and function of the aminoacyl-tRNA binding site. The protein is Large ribosomal subunit protein bL19 of Paracoccus denitrificans (strain Pd 1222).